A 770-amino-acid polypeptide reads, in one-letter code: DNA topoisomerase 1 (770 aa).

The region spanning 4 to 140 (FRIIIAEKAD…EIRRAKFSAL (137 aa)) is the Toprim domain. Mg(2+) contacts are provided by Glu10 and Asp109. The 408-residue stretch at 156–563 (NYSLADAADA…ESKKMLHEVL (408 aa)) folds into the Topo IA-type catalytic domain. Residues 194-199 (SAGRVQ) form an interaction with DNA region. Catalysis depends on Tyr312, which acts as the O-(5'-phospho-DNA)-tyrosine intermediate. C4-type zinc fingers lie at residues 611–638 (CEDPSCKINFRIKRNGSITLSDQKCPVC), 673–700 (CPADHGRLVLRQSKYGKRFLGCSNYPKC), and 719–744 (CPYCGAPILALSRNGRKWKFCPNMQC).

Belongs to the type IA topoisomerase family. In terms of assembly, monomer. The cofactor is Mg(2+).

The catalysed reaction is ATP-independent breakage of single-stranded DNA, followed by passage and rejoining.. Its function is as follows. Releases the supercoiling and torsional tension of DNA, which is introduced during the DNA replication and transcription, by transiently cleaving and rejoining one strand of the DNA duplex. Introduces a single-strand break via transesterification at a target site in duplex DNA. The scissile phosphodiester is attacked by the catalytic tyrosine of the enzyme, resulting in the formation of a DNA-(5'-phosphotyrosyl)-enzyme intermediate and the expulsion of a 3'-OH DNA strand. The free DNA strand then undergoes passage around the unbroken strand, thus removing DNA supercoils. Finally, in the religation step, the DNA 3'-OH attacks the covalent intermediate to expel the active-site tyrosine and restore the DNA phosphodiester backbone. This is DNA topoisomerase 1 from Thermoplasma acidophilum (strain ATCC 25905 / DSM 1728 / JCM 9062 / NBRC 15155 / AMRC-C165).